Consider the following 141-residue polypeptide: Large ribosomal subunit protein uL11 (141 aa).

Belongs to the universal ribosomal protein uL11 family. As to quaternary structure, part of the ribosomal stalk of the 50S ribosomal subunit. Interacts with L10 and the large rRNA to form the base of the stalk. L10 forms an elongated spine to which L12 dimers bind in a sequential fashion forming a multimeric L10(L12)X complex. Post-translationally, one or more lysine residues are methylated.

Functionally, forms part of the ribosomal stalk which helps the ribosome interact with GTP-bound translation factors. This is Large ribosomal subunit protein uL11 from Nostoc sp. (strain PCC 7120 / SAG 25.82 / UTEX 2576).